The sequence spans 416 residues: Inhibitor of growth protein 3 (416 aa).

Disordered stretches follow at residues 126-165, 177-198, and 283-319; these read LDTP…PEKK, SDAS…STNN, and QTLT…SSSL. Positions 136 to 152 are enriched in basic residues; that stretch reads HHVHSHSSGEKRKHIPS. Residues 156-165 show a composition bias toward basic and acidic residues; it reads STTDHVPEKK. Residues 177–187 are compositionally biased toward polar residues; it reads SDASKENTAGC. Composition is skewed to low complexity over residues 189-198, 283-293, and 302-319; these read TNLSSSSTNN, QTLTSSATTDS, and NNKS…SSSL. The segment at 358 to 407 adopts a PHD-type zinc-finger fold; the sequence is PRYCICNQVSYGEMVGCDNQDCPIEWFHYGCVGLSEAPKGKWYCPQCTAA. Residues Cys361, Cys363, Cys374, Cys379, His385, Cys388, Cys401, and Cys404 each contribute to the Zn(2+) site.

This sequence belongs to the ING family. Interacts with H3K4me3 and to a lesser extent with H3K4me2. Component of the NuA4 histone acetyltransferase complex.

Its subcellular location is the nucleus. Its function is as follows. Component of the NuA4 histone acetyltransferase (HAT) complex which is involved in transcriptional activation of select genes principally by acetylation of nucleosomal histone H4 and H2A. This modification may both alter nucleosome - DNA interactions and promote interaction of the modified histones with other proteins which positively regulate transcription. NuA4 may also play a direct role in DNA repair when directly recruited to sites of DNA damage. This chain is Inhibitor of growth protein 3 (ing3), found in Xenopus laevis (African clawed frog).